Here is a 363-residue protein sequence, read N- to C-terminus: Spermidine/putrescine import ATP-binding protein PotA 2 (363 aa).

Positions 6–236 constitute an ABC transporter domain; the sequence is LEIRNVTRRF…PRSRFVADFI (231 aa). 38 to 45 contributes to the ATP binding site; the sequence is GPSGCGKT.

It belongs to the ABC transporter superfamily. Spermidine/putrescine importer (TC 3.A.1.11.1) family. As to quaternary structure, the complex is composed of two ATP-binding proteins (PotA), two transmembrane proteins (PotB and PotC) and a solute-binding protein (PotD).

It is found in the cell inner membrane. The enzyme catalyses ATP + H2O + polyamine-[polyamine-binding protein]Side 1 = ADP + phosphate + polyamineSide 2 + [polyamine-binding protein]Side 1.. In terms of biological role, part of the ABC transporter complex PotABCD involved in spermidine/putrescine import. Responsible for energy coupling to the transport system. This is Spermidine/putrescine import ATP-binding protein PotA 2 from Pseudomonas aeruginosa (strain ATCC 15692 / DSM 22644 / CIP 104116 / JCM 14847 / LMG 12228 / 1C / PRS 101 / PAO1).